Here is a 702-residue protein sequence, read N- to C-terminus: Lipase maturation factor 2 (702 aa).

The next 8 membrane-spanning stretches (helical) occupy residues Leu-10–Ile-30, Ala-75–Leu-95, Asp-164–Val-184, Leu-226–Ile-246, Leu-259–Val-279, Leu-316–Leu-336, Val-363–Leu-383, and Ala-398–Val-418. Asn-488 carries N-linked (GlcNAc...) asparagine glycosylation. Residues Ile-636 to Ala-656 form a helical membrane-spanning segment. Residues Leu-660 to Lys-702 are disordered. The segment covering Gln-665–Ala-681 has biased composition (basic and acidic residues). The segment covering Ala-682 to Arg-693 has biased composition (low complexity).

The protein belongs to the lipase maturation factor family.

Its subcellular location is the endoplasmic reticulum membrane. Its function is as follows. Involved in the maturation of specific proteins in the endoplasmic reticulum. May be required for maturation and transport of active lipoprotein lipase (LPL) through the secretory pathway. In Mus musculus (Mouse), this protein is Lipase maturation factor 2 (Lmf2).